The chain runs to 1025 residues: AP-2 complex subunit alpha (1025 aa).

The segment at 713 to 737 (RSIMVPMPPPSRRNTIDDVNSKISS) is disordered. Thr727 is modified (phosphothreonine). The residue at position 733 (Ser733) is a Phosphoserine.

It belongs to the adaptor complexes large subunit family. Adaptor protein complex 2 (AP-2) is a heterotetramer composed of two large adaptins (alpha-type subunit APL3 and beta-type subunit APL1), a medium chain (mu-type subunit APM4) and a small adaptin (sigma-type subunit APS2).

Its subcellular location is the cell membrane. It localises to the membrane. The protein localises to the coated pit. Functionally, adaptins are components of the adaptor complexes which link clathrin to receptors in coated vesicles. Clathrin-associated protein complexes are believed to interact with the cytoplasmic tails of membrane proteins, leading to their selection and concentration. Alpha adaptin is a subunit of the plasma membrane adaptor. Facilitates interaction between APL1 and APS2. This Saccharomyces cerevisiae (strain ATCC 204508 / S288c) (Baker's yeast) protein is AP-2 complex subunit alpha (APL3).